The chain runs to 93 residues: Large ribosomal subunit protein bL27 (93 aa).

Residues 1-22 (MAHKKAGGSSRNGRDSAGRRLG) are disordered.

It belongs to the bacterial ribosomal protein bL27 family.

The chain is Large ribosomal subunit protein bL27 from Parvibaculum lavamentivorans (strain DS-1 / DSM 13023 / NCIMB 13966).